A 503-amino-acid polypeptide reads, in one-letter code: Cobyric acid synthase (503 aa).

The 190-residue stretch at 255–444 (DIDIAVIRYP…FHDLFHNDAF (190 aa)) folds into the GATase cobBQ-type domain. Cys337 (nucleophile) is an active-site residue. Residue His436 is part of the active site.

This sequence belongs to the CobB/CobQ family. CobQ subfamily.

Its pathway is cofactor biosynthesis; adenosylcobalamin biosynthesis. Catalyzes amidations at positions B, D, E, and G on adenosylcobyrinic A,C-diamide. NH(2) groups are provided by glutamine, and one molecule of ATP is hydrogenolyzed for each amidation. The sequence is that of Cobyric acid synthase from Geobacillus sp. (strain WCH70).